Here is a 494-residue protein sequence, read N- to C-terminus: Cytochrome P450 2A11 (494 aa).

Lys-379 carries the N6-acetyllysine modification. Cys-439 contacts heme.

Belongs to the cytochrome P450 family. Heme is required as a cofactor. As to expression, expressed in liver and lung as well as in nasal tissues.

The protein resides in the endoplasmic reticulum membrane. The protein localises to the microsome membrane. The catalysed reaction is an organic molecule + reduced [NADPH--hemoprotein reductase] + O2 = an alcohol + oxidized [NADPH--hemoprotein reductase] + H2O + H(+). Catalyzes the oxygenation of a variety of substrates, including ethanol and procarcinogens such as N-nitrosodiethylamine and phenacetin. Has no or little activity as a coumarin 7-hydroxylase and in the formation of androstenedione from testosterone. This chain is Cytochrome P450 2A11 (CYP2A11), found in Oryctolagus cuniculus (Rabbit).